The primary structure comprises 93 residues: Class I hydrophobin SSP1 (93 aa).

Residues 1–26 (MKYITAISMLATAALTAATPLNGVEA) form the signal peptide. 4 disulfides stabilise this stretch: Cys-39–Cys-71, Cys-47–Cys-65, Cys-48–Cys-56, and Cys-72–Cys-89.

It belongs to the fungal hydrophobin family. As to quaternary structure, self-assembles to form functional amyloid fibrils called rodlets. Self-assembly into fibrillar rodlets occurs spontaneously at hydrophobic:hydrophilic interfaces and the rodlets further associate laterally to form amphipathic monolayers.

Its subcellular location is the secreted. The protein localises to the cell wall. Its function is as follows. Aerial growth, conidiation, and dispersal of filamentous fungi in the environment rely upon a capability of their secreting small amphipathic proteins called hydrophobins (HPBs) with low sequence identity. Class I can self-assemble into an outermost layer of rodlet bundles on aerial cell surfaces, conferring cellular hydrophobicity that supports fungal growth, development and dispersal; whereas Class II form highly ordered films at water-air interfaces through intermolecular interactions but contribute nothing to the rodlet structure. SSP1 is a class I hydrophobin that acts as an effector in the ericoid mycorrhizal interaction with Vaccinium myrtillus. May enhance attachment of the fungus to the root surface and protect the fungal hypha from plant defense compounds. This chain is Class I hydrophobin SSP1, found in Oidiodendron maius (strain Zn).